Reading from the N-terminus, the 251-residue chain is Ubiquinone/menaquinone biosynthesis C-methyltransferase UbiE (251 aa).

S-adenosyl-L-methionine-binding positions include threonine 74, aspartate 95, and 123–124; that span reads DA.

The protein belongs to the class I-like SAM-binding methyltransferase superfamily. MenG/UbiE family.

It carries out the reaction a 2-demethylmenaquinol + S-adenosyl-L-methionine = a menaquinol + S-adenosyl-L-homocysteine + H(+). It catalyses the reaction a 2-methoxy-6-(all-trans-polyprenyl)benzene-1,4-diol + S-adenosyl-L-methionine = a 5-methoxy-2-methyl-3-(all-trans-polyprenyl)benzene-1,4-diol + S-adenosyl-L-homocysteine + H(+). It functions in the pathway quinol/quinone metabolism; menaquinone biosynthesis; menaquinol from 1,4-dihydroxy-2-naphthoate: step 2/2. Its pathway is cofactor biosynthesis; ubiquinone biosynthesis. In terms of biological role, methyltransferase required for the conversion of demethylmenaquinol (DMKH2) to menaquinol (MKH2) and the conversion of 2-polyprenyl-6-methoxy-1,4-benzoquinol (DDMQH2) to 2-polyprenyl-3-methyl-6-methoxy-1,4-benzoquinol (DMQH2). This is Ubiquinone/menaquinone biosynthesis C-methyltransferase UbiE from Idiomarina loihiensis (strain ATCC BAA-735 / DSM 15497 / L2-TR).